The primary structure comprises 149 residues: UPF0260 protein Psyr_1567 (149 aa).

This sequence belongs to the UPF0260 family.

This is UPF0260 protein Psyr_1567 from Pseudomonas syringae pv. syringae (strain B728a).